The chain runs to 69 residues: Sec-independent protein translocase protein TatA (69 aa).

A helical transmembrane segment spans residues Met-1 to Gly-21.

This sequence belongs to the TatA/E family. As to quaternary structure, forms a complex with TatC.

The protein localises to the cell inner membrane. Functionally, part of the twin-arginine translocation (Tat) system that transports large folded proteins containing a characteristic twin-arginine motif in their signal peptide across membranes. TatA could form the protein-conducting channel of the Tat system. In Chlorobium phaeovibrioides (strain DSM 265 / 1930) (Prosthecochloris vibrioformis (strain DSM 265)), this protein is Sec-independent protein translocase protein TatA.